A 260-amino-acid polypeptide reads, in one-letter code: Dof zinc finger protein DOF1.2 (260 aa).

The segment at 38–92 adopts a Dof-type zinc-finger fold; it reads PACPRCASSNTKFCYYNNYSLSQPRYFCKGCRRYWTKGGSLRNIPVGGGCRKRSR. Zn(2+) contacts are provided by Cys-40, Cys-43, Cys-65, and Cys-68. Residues 83 to 124 are disordered; that stretch reads VGGGCRKRSRSRQNSHKRFGRNENRPDGLINQDDGFQSSPPG. Positions 87 to 101 are enriched in basic residues; the sequence is CRKRSRSRQNSHKRF.

The protein localises to the nucleus. Its function is as follows. Transcription factor that binds specifically to a 5'-AA[AG]G-3' consensus core sequence. The polypeptide is Dof zinc finger protein DOF1.2 (DOF1.2) (Arabidopsis thaliana (Mouse-ear cress)).